The chain runs to 70 residues: Small ribosomal subunit protein bS21 (70 aa).

It belongs to the bacterial ribosomal protein bS21 family.

This is Small ribosomal subunit protein bS21 from Helicobacter acinonychis (strain Sheeba).